The following is a 122-amino-acid chain: Large ribosomal subunit protein uL14 (122 aa).

The protein belongs to the universal ribosomal protein uL14 family. In terms of assembly, part of the 50S ribosomal subunit. Forms a cluster with proteins L3 and L19. In the 70S ribosome, L14 and L19 interact and together make contacts with the 16S rRNA in bridges B5 and B8.

Binds to 23S rRNA. Forms part of two intersubunit bridges in the 70S ribosome. This chain is Large ribosomal subunit protein uL14, found in Mycobacterium ulcerans (strain Agy99).